Reading from the N-terminus, the 620-residue chain is 1-deoxy-D-xylulose-5-phosphate synthase (620 aa).

Thiamine diphosphate-binding positions include His80 and 121 to 123 (GHS). Asp152 serves as a coordination point for Mg(2+). Thiamine diphosphate contacts are provided by residues 153-154 (GA), Asn181, Tyr288, and Glu370. Residue Asn181 participates in Mg(2+) binding.

Belongs to the transketolase family. DXPS subfamily. Homodimer. Requires Mg(2+) as cofactor. Thiamine diphosphate is required as a cofactor.

The catalysed reaction is D-glyceraldehyde 3-phosphate + pyruvate + H(+) = 1-deoxy-D-xylulose 5-phosphate + CO2. Its pathway is metabolic intermediate biosynthesis; 1-deoxy-D-xylulose 5-phosphate biosynthesis; 1-deoxy-D-xylulose 5-phosphate from D-glyceraldehyde 3-phosphate and pyruvate: step 1/1. Its function is as follows. Catalyzes the acyloin condensation reaction between C atoms 2 and 3 of pyruvate and glyceraldehyde 3-phosphate to yield 1-deoxy-D-xylulose-5-phosphate (DXP). The chain is 1-deoxy-D-xylulose-5-phosphate synthase from Escherichia coli O139:H28 (strain E24377A / ETEC).